The sequence spans 70 residues: DNA-binding transcriptional activator AlpA (70 aa).

A DNA-binding region (H-T-H motif) is located at residues 12-31 (LPAVIQKTGMARATIYDWLN).

Functionally, positive regulator of the expression of the slpA gene. When overexpressed, leads to suppression of the capsule overproduction and UV sensitivity phenotypes of cells mutant for the Lon ATP-dependent protease. Part of the cryptic P4-like prophage CP4-57. Overexpression of AlpA leads to excision of the CP4-57 prophage by IntA. This inactivates ssrA (the gene upstream of the prophage) that encodes tmRNA which is required to rescue stalled ribosomes in a process known as trans-translation. This Escherichia coli (strain K12) protein is DNA-binding transcriptional activator AlpA.